The following is a 195-amino-acid chain: Insertion element IS136 uncharacterized protein Atu4601 (195 aa).

The Integrase catalytic domain occupies 25–194 (MVMRSNLRWC…SPRQFIRAKS (170 aa)).

This chain is Insertion element IS136 uncharacterized protein Atu4601, found in Agrobacterium fabrum (strain C58 / ATCC 33970) (Agrobacterium tumefaciens (strain C58)).